The following is a 632-amino-acid chain: MLTLIKLKIQNFGRFLSNMIMPNISIFIAWGMMNALFMPLGWQPNKTLEQLISPMIFYLLPILIGYTGGSLISGSRGGLIGSITTIGVITSTNIPMLLGAMISGPLGGWTIKYFDKKIENKVKNGFEMLVNNFSLAILGILLAIISFFTIGPFIEWVSYFLGTLIQIILSYNLLPLTSIIIEPAKIFFLNNVINHGIFSPLGIQDALDKNHSIFFLIESNPGPGLGLLIAWFFFGKGELSKSSGGAALIEFFGGIHEIYFPYVLIKPKLIIPLILGGMSGIFILVLLHGGLISTASPGSILSILAMTPKGLYFSNIISVACSFLVSFISSSILLKYDFNTIQKDSNYTVKQGKNSFNSKTSREDFNNFNFSKIKTIIVACDAGMGSSAMGASILRKKIKNANLNHISVLNMAINALPQDADLIITHQNLTNRAKDNAPFSQHISLKNFLNNHFYDNLVKKLVENMVFLYDNHTDSVNKYTQQKKDALFQLNEENIILNQYASNKEEAINIVGKHLVKQGYVKFDYIDSMLEREKMASTWLGESIALPHGTIEAKDSVLKTGIIFCQFPKGVRFGEDVDDIAYLVIGIAAKNNEHIMVVSNITNALDKKDTIQRLSHTTSIKEALSLLTMEKI.

The PTS EIIC type-2 domain occupies 12–341 (FGRFLSNMIM…ILLKYDFNTI (330 aa)). Transmembrane regions (helical) follow at residues 24 to 45 (ISIF…WQPN), 50 to 70 (QLIS…TGGS), 134 to 155 (SLAI…PFIE), 165 to 185 (IQII…EPAK), 273 to 292 (LILG…GGLI), and 313 to 334 (FSNI…SILL). The PTS EIIB type-2 domain occupies 374–469 (KTIIVACDAG…KLVENMVFLY (96 aa)). Cysteine 380 functions as the Phosphocysteine intermediate; for EIIB activity in the catalytic mechanism. Cysteine 380 is modified (phosphocysteine; by EIIA). A PTS EIIA type-2 domain is found at 488-630 (FQLNEENIIL…KEALSLLTME (143 aa)). Histidine 548 acts as the Tele-phosphohistidine intermediate; for EIIA activity in catalysis. The residue at position 548 (histidine 548) is a Phosphohistidine; by HPr.

As to quaternary structure, homodimer. Post-translationally, an intramolecular phosphotransfer takes places between His-548 and Cys-380.

The protein resides in the cell inner membrane. It catalyses the reaction D-mannitol(out) + N(pros)-phospho-L-histidyl-[protein] = D-mannitol 1-phosphate(in) + L-histidyl-[protein]. In terms of biological role, the phosphoenolpyruvate-dependent sugar phosphotransferase system (sugar PTS), a major carbohydrate active transport system, catalyzes the phosphorylation of incoming sugar substrates concomitantly with their translocation across the cell membrane. This system is involved in D-mannitol transport. The polypeptide is PTS system mannitol-specific EIICBA component (mtlA) (Buchnera aphidicola subsp. Acyrthosiphon pisum (strain APS) (Acyrthosiphon pisum symbiotic bacterium)).